A 139-amino-acid chain; its full sequence is Putative nickel-responsive regulator (139 aa).

Ni(2+) contacts are provided by His79, His90, His92, and Cys98.

The protein belongs to the transcriptional regulatory CopG/NikR family. Ni(2+) serves as cofactor.

Its function is as follows. Transcriptional regulator. This is Putative nickel-responsive regulator from Geotalea uraniireducens (strain Rf4) (Geobacter uraniireducens).